Here is a 236-residue protein sequence, read N- to C-terminus: Small ribosomal subunit protein uS3 (236 aa).

The KH type-2 domain occupies 39–107; that stretch reads VREFLKKKLA…PVHLNIEEVR (69 aa). A disordered region spans residues 215-236; sequence AAQPAEPEKKVRKSGAKNAATS.

It belongs to the universal ribosomal protein uS3 family. In terms of assembly, part of the 30S ribosomal subunit. Forms a tight complex with proteins S10 and S14.

Binds the lower part of the 30S subunit head. Binds mRNA in the 70S ribosome, positioning it for translation. The sequence is that of Small ribosomal subunit protein uS3 from Methylobacillus flagellatus (strain ATCC 51484 / DSM 6875 / VKM B-1610 / KT).